Here is a 380-residue protein sequence, read N- to C-terminus: Cytochrome b (380 aa).

A run of 4 helical transmembrane segments spans residues 34-54 (FGSL…LLAM), 78-99 (WLIR…YFHI), 114-134 (WNTG…GYVL), and 179-199 (FFAL…IHLT). Residues histidine 84 and histidine 98 each coordinate heme b. The heme b site is built by histidine 183 and histidine 197. A ubiquinone is bound at residue histidine 202. The next 4 helical transmembrane spans lie at 227–247 (LKDI…ALFS), 289–309 (LGGV…PFLH), 321–341 (ISQL…WVGS), and 348–368 (FIII…VLFP).

Belongs to the cytochrome b family. In terms of assembly, the cytochrome bc1 complex contains 11 subunits: 3 respiratory subunits (MT-CYB, CYC1 and UQCRFS1), 2 core proteins (UQCRC1 and UQCRC2) and 6 low-molecular weight proteins (UQCRH/QCR6, UQCRB/QCR7, UQCRQ/QCR8, UQCR10/QCR9, UQCR11/QCR10 and a cleavage product of UQCRFS1). This cytochrome bc1 complex then forms a dimer. Requires heme b as cofactor.

It localises to the mitochondrion inner membrane. Functionally, component of the ubiquinol-cytochrome c reductase complex (complex III or cytochrome b-c1 complex) that is part of the mitochondrial respiratory chain. The b-c1 complex mediates electron transfer from ubiquinol to cytochrome c. Contributes to the generation of a proton gradient across the mitochondrial membrane that is then used for ATP synthesis. This chain is Cytochrome b (MT-CYB), found in Pachyptila turtur (Fairy prion).